Consider the following 164-residue polypeptide: Thiol peroxidase (164 aa).

Positions 18 to 163 constitute a Thioredoxin domain; the sequence is INEGDFAPDF…FDAALAAYKN (146 aa). Residue Cys60 is the Cysteine sulfenic acid (-SOH) intermediate of the active site. Cys60 and Cys93 are oxidised to a cystine.

The protein belongs to the peroxiredoxin family. Tpx subfamily. In terms of assembly, homodimer.

It carries out the reaction a hydroperoxide + [thioredoxin]-dithiol = an alcohol + [thioredoxin]-disulfide + H2O. Functionally, thiol-specific peroxidase that catalyzes the reduction of hydrogen peroxide and organic hydroperoxides to water and alcohols, respectively. Plays a role in cell protection against oxidative stress by detoxifying peroxides. The chain is Thiol peroxidase from Staphylococcus aureus (strain MRSA252).